We begin with the raw amino-acid sequence, 61 residues long: Small ribosomal subunit protein uS14 (61 aa).

Cys24, Cys27, Cys40, and Cys43 together coordinate Zn(2+).

It belongs to the universal ribosomal protein uS14 family. Zinc-binding uS14 subfamily. Part of the 30S ribosomal subunit. Contacts proteins S3 and S10. Requires Zn(2+) as cofactor.

Its function is as follows. Binds 16S rRNA, required for the assembly of 30S particles and may also be responsible for determining the conformation of the 16S rRNA at the A site. This is Small ribosomal subunit protein uS14 from Pseudothermotoga lettingae (strain ATCC BAA-301 / DSM 14385 / NBRC 107922 / TMO) (Thermotoga lettingae).